The chain runs to 227 residues: MNTAIVLAGGSGKRMHSEIPKQYMQLNGKPVIYYSLKAFEESEHVDEIILVTAKEYIEYVRNEIAGSQFAKLTKIIEGGKERFDSVWAGLQQISEKGYVYIHDGARPCINQNIINACWETVVQTDACVAAAPVKDTIKVADADEYAINTPDRKTLWQIQTPQVFSADVIKEAYSRLYEQNCFDGVTDDAMVVERYGNSKIKLVNCGYCNIKITTPEDMEIAGIFLKG.

This sequence belongs to the IspD/TarI cytidylyltransferase family. IspD subfamily.

The catalysed reaction is 2-C-methyl-D-erythritol 4-phosphate + CTP + H(+) = 4-CDP-2-C-methyl-D-erythritol + diphosphate. The protein operates within isoprenoid biosynthesis; isopentenyl diphosphate biosynthesis via DXP pathway; isopentenyl diphosphate from 1-deoxy-D-xylulose 5-phosphate: step 2/6. Its function is as follows. Catalyzes the formation of 4-diphosphocytidyl-2-C-methyl-D-erythritol from CTP and 2-C-methyl-D-erythritol 4-phosphate (MEP). The protein is 2-C-methyl-D-erythritol 4-phosphate cytidylyltransferase of Lachnospira eligens (strain ATCC 27750 / DSM 3376 / VPI C15-48 / C15-B4) (Eubacterium eligens).